Reading from the N-terminus, the 283-residue chain is Formamidopyrimidine-DNA glycosylase (283 aa).

Proline 2 (schiff-base intermediate with DNA) is an active-site residue. Glutamate 3 (proton donor) is an active-site residue. The active-site Proton donor; for beta-elimination activity is the lysine 60. DNA is bound by residues histidine 100, arginine 119, and arginine 164. The segment at 249–283 (WVYNRAGEPCKVCGDVIQRIKLGGRSSHFCRQCQV) adopts an FPG-type zinc-finger fold. Arginine 273 serves as the catalytic Proton donor; for delta-elimination activity.

The protein belongs to the FPG family. Monomer. Zn(2+) is required as a cofactor.

The catalysed reaction is Hydrolysis of DNA containing ring-opened 7-methylguanine residues, releasing 2,6-diamino-4-hydroxy-5-(N-methyl)formamidopyrimidine.. It carries out the reaction 2'-deoxyribonucleotide-(2'-deoxyribose 5'-phosphate)-2'-deoxyribonucleotide-DNA = a 3'-end 2'-deoxyribonucleotide-(2,3-dehydro-2,3-deoxyribose 5'-phosphate)-DNA + a 5'-end 5'-phospho-2'-deoxyribonucleoside-DNA + H(+). Its function is as follows. Involved in base excision repair of DNA damaged by oxidation or by mutagenic agents. Acts as a DNA glycosylase that recognizes and removes damaged bases. Has a preference for oxidized purines, such as 7,8-dihydro-8-oxoguanine (8-oxoG). Has AP (apurinic/apyrimidinic) lyase activity and introduces nicks in the DNA strand. Cleaves the DNA backbone by beta-delta elimination to generate a single-strand break at the site of the removed base with both 3'- and 5'-phosphates. This Nostoc sp. (strain PCC 7120 / SAG 25.82 / UTEX 2576) protein is Formamidopyrimidine-DNA glycosylase.